An 81-amino-acid chain; its full sequence is Putative defensin-like protein 31 (81 aa).

The signal sequence occupies residues 1–26; sequence MTSSSKCLFFVFLCLAALLTPYLAEA. Intrachain disulfides connect cysteine 38–cysteine 58, cysteine 44–cysteine 70, and cysteine 48–cysteine 72.

The protein belongs to the DEFL family.

The protein localises to the secreted. This Arabidopsis thaliana (Mouse-ear cress) protein is Putative defensin-like protein 31.